The primary structure comprises 130 residues: Small ribosomal subunit protein uS9 (130 aa).

Residues 98–130 (LKRAGLLTRDPRMKERKKPGLKKARRSPQFSKR) are disordered. Residues 111-130 (KERKKPGLKKARRSPQFSKR) show a composition bias toward basic residues.

It belongs to the universal ribosomal protein uS9 family.

This Staphylococcus carnosus (strain TM300) protein is Small ribosomal subunit protein uS9 (rpsI).